The sequence spans 458 residues: Retinoic acid receptor alpha (458 aa).

The tract at residues 1 to 87 (MSSKDNTCPP…PPPLPRIYKP (87 aa)) is modulating. The disordered stretch occupies residues 39 to 78 (GGLPGVQHQPPLSGYSTPSPATIETQSTSSEEIVPSPPTP). The span at 52-69 (GYSTPSPATIETQSTSSE) shows a compositional bias: polar residues. 2 NR C4-type zinc fingers span residues 88-108 (CFVC…CEGC) and 124-148 (CHRD…LQKC). The nuclear receptor DNA-binding region spans 88 to 153 (CFVCQDKSSG…RLQKCFEVGM (66 aa)). The interval 154 to 182 (SKESVRNDRNKKKKESPKPEAIESYILSP) is hinge. In terms of domain architecture, NR LBD spans 183-417 (ETQDLIEKVQ…LIQEMLENSE (235 aa)). The 9aaTAD signature appears at 407 to 415 (PLIQEMLEN). The disordered stretch occupies residues 419–458 (LDTLGGGASSDAPVTPVAPGSCSPSLSPSSTHSSPSTHSP). Residues 439 to 458 (SCSPSLSPSSTHSSPSTHSP) are compositionally biased toward low complexity.

It belongs to the nuclear hormone receptor family. NR1 subfamily. As to quaternary structure, heterodimer; with an rxr molecule. Binds DNA preferentially as a rar/rxr heterodimer.

Its subcellular location is the nucleus. Receptor for retinoic acid. Retinoic acid receptors bind as heterodimers to their target response elements in response to their ligands, all-trans or 9-cis retinoic acid, and regulate gene expression in various biological processes. The rar/rxr heterodimers bind to the retinoic acid response elements (RARE) composed of tandem 5'-AGGTCA-3' sites known as DR1-DR5. Required for primary neurogenesis and for anteroposterior neural patterning. In Xenopus laevis (African clawed frog), this protein is Retinoic acid receptor alpha (rara).